A 429-amino-acid polypeptide reads, in one-letter code: Putative pentatricopeptide repeat-containing protein At1g03510 (429 aa).

PPR repeat units follow at residues 11–45, 47–81, 82–112, 113–147, 148–180, 181–215, 216–246, 247–281, 282–312, and 318–348; these read KLIS…FALP, DAHV…NFLS, NPFV…IPQR, NAVV…PNES, SFNA…RFKP, NLIT…LIEP, HPQL…MEDR, DVVA…KVTP, DDIA…MQGD, and SKDH…MPEK. The segment at 353 to 428 is type E motif; it reads TWGALLGACR…SPGSSWCLFK (76 aa).

This sequence belongs to the PPR family. PCMP-E subfamily.

This chain is Putative pentatricopeptide repeat-containing protein At1g03510 (PCMP-E3), found in Arabidopsis thaliana (Mouse-ear cress).